Consider the following 272-residue polypeptide: Ribonuclease HII (272 aa).

The region spanning 87–272 (KYVAGVDEVG…HRMSFLKNIL (186 aa)) is the RNase H type-2 domain. 3 residues coordinate a divalent metal cation: Asp-93, Glu-94, and Asp-188.

It belongs to the RNase HII family. It depends on Mn(2+) as a cofactor. The cofactor is Mg(2+).

The protein localises to the cytoplasm. It catalyses the reaction Endonucleolytic cleavage to 5'-phosphomonoester.. Endonuclease that specifically degrades the RNA of RNA-DNA hybrids. This is Ribonuclease HII from Clostridium perfringens (strain SM101 / Type A).